Here is a 643-residue protein sequence, read N- to C-terminus: Phosphomethylpyrimidine synthase (643 aa).

Residues N248, M277, Y306, H342, 362–364 (SRG), 403–406 (DGLR), and E442 each bind substrate. H446 is a Zn(2+) binding site. Y469 is a substrate binding site. H510 is a Zn(2+) binding site. [4Fe-4S] cluster is bound by residues C590, C593, and C598.

This sequence belongs to the ThiC family. In terms of assembly, homodimer. [4Fe-4S] cluster serves as cofactor.

It catalyses the reaction 5-amino-1-(5-phospho-beta-D-ribosyl)imidazole + S-adenosyl-L-methionine = 4-amino-2-methyl-5-(phosphooxymethyl)pyrimidine + CO + 5'-deoxyadenosine + formate + L-methionine + 3 H(+). It participates in cofactor biosynthesis; thiamine diphosphate biosynthesis. Its function is as follows. Catalyzes the synthesis of the hydroxymethylpyrimidine phosphate (HMP-P) moiety of thiamine from aminoimidazole ribotide (AIR) in a radical S-adenosyl-L-methionine (SAM)-dependent reaction. In Burkholderia mallei (strain NCTC 10247), this protein is Phosphomethylpyrimidine synthase.